The chain runs to 442 residues: MPSLALPINKPSHHNVNYNGNSFNSIHATSFGMSPQSWGNSFSGQAWLRDTIPSLSNVVESQTIPEEDSTSYLNRLEEAFCRDFRCCGQTLEDLHQLIHHYEEQHAVLATDSAVPQEYSLDSNNAAQSNHSHIQALKQRERIRMHDLADQLGTSEISDNSAVLPFAFPANGGAPGPYRVSVVVPAAAAAAAAAASSDMSSDEASSQAETTGTPKKMPESLVMDASSPLSDMSMSIDVGESAANNVFAFNQKDMVDSTYLPPFNYDHDVFSFAPSVASADQFTESSMSPTPEVVSPAATNSAISSPFVRKSSSDLEAKPSKKQRSTPAFSHDSPLTIDYPGSNLVVVDKPYKCPVPNCDKAYKNQNGLKYHKLHGHCSPITTPTPAPIPHQGFVVENKPYRCEVCSKRYKNLNGLKYHRTHSHLQVSMAQAQREVQMNFMRTA.

A compositionally biased stretch (low complexity) spans 193 to 208 (AASSDMSSDEASSQAE). 2 disordered regions span residues 193-219 (AASS…MPES) and 304-333 (SPFV…HDSP). 2 consecutive C2H2-type zinc fingers follow at residues 350 to 375 (YKCP…LHGH) and 399 to 422 (YRCE…THSH).

It localises to the cytoplasm. The protein localises to the nucleus. In Schizosaccharomyces pombe (strain 972 / ATCC 24843) (Fission yeast), this protein is Zinc finger protein sfp1 (sfp1).